Consider the following 878-residue polypeptide: Valine--tRNA ligase (878 aa).

Residues 43-53 carry the 'HIGH' region motif; it reads PYPTGRLHLGH. The short motif at 527–531 is the 'KMSKS' region element; that stretch reads KMSKS. Lys-530 is a binding site for ATP.

Belongs to the class-I aminoacyl-tRNA synthetase family. ValS type 2 subfamily.

Its subcellular location is the cytoplasm. The catalysed reaction is tRNA(Val) + L-valine + ATP = L-valyl-tRNA(Val) + AMP + diphosphate. Functionally, catalyzes the attachment of valine to tRNA(Val). As ValRS can inadvertently accommodate and process structurally similar amino acids such as threonine, to avoid such errors, it has a 'posttransfer' editing activity that hydrolyzes mischarged Thr-tRNA(Val) in a tRNA-dependent manner. The sequence is that of Valine--tRNA ligase from Methanocaldococcus jannaschii (strain ATCC 43067 / DSM 2661 / JAL-1 / JCM 10045 / NBRC 100440) (Methanococcus jannaschii).